The chain runs to 424 residues: Myb family transcription factor RLI1 (424 aa).

Residues 144 to 165 are disordered; the sequence is RPQKRDSGERTPLPPPSQQQHQ. Positions 238–298 constitute an HTH myb-type domain; it reads APSKTRIRWT…HLQKYRIAKY (61 aa). The segment at residues 269–294 is a DNA-binding region (H-T-H motif); sequence PKGILKLMNSDGLTIYHIKSHLQKYR. The short motif at 342–347 is the LHEQLE element; the sequence is LHEQLE. A coiled-coil region spans residues 342–391; the sequence is LHEQLEIQRNLQLRIEEQGKRLQKMFEDQLKASRSVMEPQELDDVVAFAA.

This sequence belongs to the MYB-CC family. In terms of assembly, homodimer. Interacts with PHR2 in the nucleus. Interacts with SPX1 and SPX2 in the nucleus; these interactions prevent binding to the promoters of target genes, thus regulating negatively leaf inclination in response to phosphate (Pi) starvation.

The protein localises to the nucleus. Its function is as follows. Transcription factor binding to specific DNA sequences of target genes promoters, such as the motif R1BS 5'-NAKATNCN-3' and the motif P1BS 5'-GNATATNC-3' to trigger their expression. Nitrate-induced component involved in modulating phosphate (Pi) response and homeostasis together with PHR2; activates directly the expression of Pi starvation-induced (PSI) genes upon nitrate disponibility, thus triggering the nitrate-induced phosphate response (NIPR) promoting Pi uptake activity. Involved in the shoot architecture; positively regulates leaf inclination by affecting lamina joint cell elongation via the direct promotion of ILI4/BU1 and BC1 genes expression, especially in response to phosphate (Pi) availability. Regulates both brassinolide (BL) biosynthesis and signaling by directly activating BL-biosynthesis and signaling genes. In Oryza sativa subsp. indica (Rice), this protein is Myb family transcription factor RLI1.